Here is a 738-residue protein sequence, read N- to C-terminus: Dipeptidyl peptidase 3 (738 aa).

Ala-2 is subject to N-acetylalanine. Zn(2+) is bound at residue His-450. Glu-451 is an active-site residue. The Zn(2+) site is built by His-455 and Glu-508.

The protein belongs to the peptidase M49 family. It depends on Zn(2+) as a cofactor.

The protein localises to the cytoplasm. It catalyses the reaction Release of an N-terminal dipeptide from a peptide comprising four or more residues, with broad specificity. Also acts on dipeptidyl 2-naphthylamides.. Its activity is regulated as follows. Inhibited by spinorphin, an opioid peptide derived from hemoglobin. In terms of biological role, cleaves and degrades bioactive peptides, including angiotensin, Leu-enkephalin and Met-enkephalin. Also cleaves Arg-Arg-beta-naphthylamide. In Rattus norvegicus (Rat), this protein is Dipeptidyl peptidase 3 (Dpp3).